The sequence spans 1025 residues: Kinesin-like protein KIN-14P (1025 aa).

Disordered regions lie at residues 1–87 (MNPM…MHHG) and 263–286 (YSQIESQTKTEKSKWEEQKKNEEE). The span at 15 to 28 (STPRSPFSPFSPLS) shows a compositional bias: low complexity. A compositionally biased stretch (basic and acidic residues) spans 29–41 (VDDRHRNHADTKT). Residues 42–53 (PRSPFSPFSPLS) are compositionally biased toward low complexity. A compositionally biased stretch (polar residues) spans 65–75 (KFQQALASSGQ). The stretch at 203 to 425 (HEIATQQLRQ…REMEKKSESN (223 aa)) forms a coiled coil. Residues 270-286 (TKTEKSKWEEQKKNEEE) are compositionally biased toward basic and acidic residues. The Kinesin motor domain occupies 509 to 838 (NIRVFCRVRP…LKFAERVSGV (330 aa)). ATP is bound at residue 593–600 (GQTGSGKT). Residues 847–879 (KEGKDVRDLMEQLASLKDTIARKDEEIERLQHQ) are a coiled coil. Disordered stretches follow at residues 881 to 926 (QRLQ…SAEA), 939 to 977 (AASMGTQGSIDVTKRPPRISDRAKSVTAKSSTSVTRPLD), and 994 to 1025 (TGLTSSSKGLASSSIKKTGSTSSLAKSSKRWA). 2 stretches are compositionally biased toward polar residues: residues 901-913 (SDTGEYSSQSRYS) and 939-948 (AASMGTQGSI). Basic and acidic residues predominate over residues 950-962 (VTKRPPRISDRAK). Low complexity-rich tracts occupy residues 963–974 (SVTAKSSTSVTR) and 998–1016 (SSSKGLASSSIKKTGSTSS).

The protein belongs to the TRAFAC class myosin-kinesin ATPase superfamily. Kinesin family. KIN-14 subfamily.

This Arabidopsis thaliana (Mouse-ear cress) protein is Kinesin-like protein KIN-14P.